We begin with the raw amino-acid sequence, 492 residues long: Catalase isozyme 2 (492 aa).

Catalysis depends on residues H65 and N138. Heme is bound at residue Y348.

Belongs to the catalase family. As to quaternary structure, homotetramer. Requires heme as cofactor.

The protein localises to the peroxisome. It is found in the glyoxysome. It catalyses the reaction 2 H2O2 = O2 + 2 H2O. In terms of biological role, occurs in almost all aerobically respiring organisms and serves to protect cells from the toxic effects of hydrogen peroxide. The sequence is that of Catalase isozyme 2 (CAT2) from Solanum tuberosum (Potato).